The primary structure comprises 163 residues: uncharacterized protein (163 aa).

This is an uncharacterized protein from Dictyostelium discoideum (Social amoeba).